We begin with the raw amino-acid sequence, 552 residues long: MKALFRACRIGKVMLRYRLDTLLDGTAVERWLRLAKPFVPRISAEIVEQSRGRRLRLALQELGPIFVKFGQILSTRRDLVPQDIGDELVMLQDRVEPFEGQTARSIIETALGKSVESAFAHFDTVPLASASISQVHAATLHDRRAVVVKVLRPDIEHQISDDIALLKSLATLVEHTHPNADKIRPREIVAEIETTLAAELDLQREGANASVLRRFWEASDDIYVPEVIWSHTAERVLTLERMYGIPSDDIALLDASGIDRKALSSKGIRVFYTQVFRDNFFHADAHSGNIWVDSDPARKSNPRFIVLDFGIMGQLSQKDQYYLAENFMAIFHKDYRRIAELHVEAGWIPPHVRIEELEAAARSVCEPYFTRPLSQISLAEVMMKLFHVARRYQLTLQPQLILLQKTLLNIEGVGRQLDPELDIWVVARPVLERILRARYSPRHALKELNKRLPEIMTHAPDTPRLIHTWLVQQVESRKQNDVYLQQIRALAMTLQGLQRRVVNAIVGSGLLVAAAVLYGLHPDGLYLGTIPVWSLISGCIGALALFSAWWRS.

One can recognise a Protein kinase domain in the interval histidine 121–alanine 504. ATP is bound by residues leucine 127–valine 135 and lysine 149. Aspartate 284 (proton acceptor) is an active-site residue. 2 helical membrane-spanning segments follow: residues valine 501–histidine 521 and isoleucine 530–tryptophan 550.

This sequence belongs to the ABC1 family. UbiB subfamily.

Its subcellular location is the cell inner membrane. It functions in the pathway cofactor biosynthesis; ubiquinone biosynthesis [regulation]. In terms of biological role, is probably a protein kinase regulator of UbiI activity which is involved in aerobic coenzyme Q (ubiquinone) biosynthesis. The chain is Probable protein kinase UbiB from Xylella fastidiosa (strain M23).